The chain runs to 204 residues: Imidazoleglycerol-phosphate dehydratase (204 aa).

This sequence belongs to the imidazoleglycerol-phosphate dehydratase family.

The protein localises to the cytoplasm. The enzyme catalyses D-erythro-1-(imidazol-4-yl)glycerol 3-phosphate = 3-(imidazol-4-yl)-2-oxopropyl phosphate + H2O. Its pathway is amino-acid biosynthesis; L-histidine biosynthesis; L-histidine from 5-phospho-alpha-D-ribose 1-diphosphate: step 6/9. This is Imidazoleglycerol-phosphate dehydratase from Albidiferax ferrireducens (strain ATCC BAA-621 / DSM 15236 / T118) (Rhodoferax ferrireducens).